A 308-amino-acid polypeptide reads, in one-letter code: Regulating synaptic membrane exocytosis protein 3 (308 aa).

The segment at 86–120 is disordered; that stretch reads STETGIAVEMRSRVTRQGSRESTDGSTNSNSSDGT. Positions 109–120 are enriched in low complexity; sequence DGSTNSNSSDGT. Positions 156–274 constitute a C2 domain; it reads PMGDVHIAIM…DLSAAVTGWY (119 aa). Phosphoserine is present on residues Ser-295 and Ser-298.

Binds PPFIA3. Does not bind RAB3.

It localises to the synapse. Functionally, regulates synaptic membrane exocytosis. The protein is Regulating synaptic membrane exocytosis protein 3 (RIMS3) of Homo sapiens (Human).